A 417-amino-acid chain; its full sequence is Exodeoxyribonuclease 7 large subunit (417 aa).

The protein belongs to the XseA family. Heterooligomer composed of large and small subunits.

It is found in the cytoplasm. The catalysed reaction is Exonucleolytic cleavage in either 5'- to 3'- or 3'- to 5'-direction to yield nucleoside 5'-phosphates.. Functionally, bidirectionally degrades single-stranded DNA into large acid-insoluble oligonucleotides, which are then degraded further into small acid-soluble oligonucleotides. In Corynebacterium glutamicum (strain ATCC 13032 / DSM 20300 / JCM 1318 / BCRC 11384 / CCUG 27702 / LMG 3730 / NBRC 12168 / NCIMB 10025 / NRRL B-2784 / 534), this protein is Exodeoxyribonuclease 7 large subunit.